We begin with the raw amino-acid sequence, 283 residues long: ATP phosphoribosyltransferase (283 aa).

It belongs to the ATP phosphoribosyltransferase family. Long subfamily. It depends on Mg(2+) as a cofactor.

The protein resides in the cytoplasm. The enzyme catalyses 1-(5-phospho-beta-D-ribosyl)-ATP + diphosphate = 5-phospho-alpha-D-ribose 1-diphosphate + ATP. It functions in the pathway amino-acid biosynthesis; L-histidine biosynthesis; L-histidine from 5-phospho-alpha-D-ribose 1-diphosphate: step 1/9. With respect to regulation, feedback inhibited by histidine. In terms of biological role, catalyzes the condensation of ATP and 5-phosphoribose 1-diphosphate to form N'-(5'-phosphoribosyl)-ATP (PR-ATP). Has a crucial role in the pathway because the rate of histidine biosynthesis seems to be controlled primarily by regulation of HisG enzymatic activity. This Azobacteroides pseudotrichonymphae genomovar. CFP2 protein is ATP phosphoribosyltransferase.